A 365-amino-acid chain; its full sequence is Protein Tob1 (365 aa).

The Bipartite nuclear localization signal signature appears at 22-39; it reads RRRVNIFGEELERLLKQK. The segment at 82–92 is important for nuclear localization; the sequence is VRGNLPQDLSV. The span at 144–160 shows a compositional bias: low complexity; that stretch reads DPASSVSSSPSPPFGHS. The tract at residues 144-171 is disordered; sequence DPASSVSSSPSPPFGHSAAVSPTFMPRS. The required for interaction with CPEB3 stretch occupies residues 161–220; the sequence is AAVSPTFMPRSTQPLTFTTATFAATKFGSTKMKNSGRSSKVARTSPISLGLNVNVNDLLK. T204 carries the phosphothreonine modification. Positions 228 to 236 match the Nuclear export signal motif; that stretch reads MHSLYGLGL. A disordered region spans residues 233–287; the sequence is GLGLGSQQQPQPQPQQPPSQPPPPPPPPQQQQQHQQQQQQQQQQQQQPQQQTSAL. Pro residues predominate over residues 243-261; it reads QPQPQQPPSQPPPPPPPPQ. The span at 262 to 283 shows a compositional bias: low complexity; sequence QQQQHQQQQQQQQQQQQQPQQQ.

This sequence belongs to the BTG family. Interacts with ERBB2. Interacts with CNOT7. Interacts with CPEB3 (via C-terminal RNA-binding region); recruits CNOT7 to CPEB3 to form a ternary complex required for mRNA deadenylation and decay. Interacts with CNOT8. Interacts with CPEB4. In terms of processing, phosphorylated on Ser and Thr residues.

The protein localises to the cytoplasm. It is found in the nucleus. Anti-proliferative protein; the function is mediated by association with deadenylase subunits of the CCR4-NOT complex. Mediates CPEB3-accelerated mRNA deadenylation by binding to CPEB3 and recruiting CNOT7 which leads to target mRNA deadenylation and decay. The polypeptide is Protein Tob1 (Tob1) (Rattus norvegicus (Rat)).